Reading from the N-terminus, the 424-residue chain is Tyrosine--tRNA ligase (424 aa).

L-tyrosine is bound at residue Tyr-37. Positions Pro-42–His-51 match the 'HIGH' region motif. An N6-acetyllysine modification is found at Lys-144. Tyr-175 and Gln-179 together coordinate L-tyrosine. Residues Lys-235–Thr-239 carry the 'KMSKS' region motif. Residue Lys-238 participates in ATP binding. The 58-residue stretch at Ala-357 to Gly-414 folds into the S4 RNA-binding domain.

Belongs to the class-I aminoacyl-tRNA synthetase family. TyrS type 1 subfamily. As to quaternary structure, homodimer.

The protein localises to the cytoplasm. The enzyme catalyses tRNA(Tyr) + L-tyrosine + ATP = L-tyrosyl-tRNA(Tyr) + AMP + diphosphate + H(+). Its function is as follows. Catalyzes the attachment of tyrosine to tRNA(Tyr) in a two-step reaction: tyrosine is first activated by ATP to form Tyr-AMP and then transferred to the acceptor end of tRNA(Tyr). This is Tyrosine--tRNA ligase from Shigella boydii serotype 4 (strain Sb227).